Here is a 271-residue protein sequence, read N- to C-terminus: Insulin-like growth factor-binding protein 5 (271 aa).

The first 19 residues, Met-1–Gly-19, serve as a signal peptide directing secretion. One can recognise an IGFBP N-terminal domain in the interval Ser-22 to Glu-102. 6 disulfides stabilise this stretch: Cys-26–Cys-52, Cys-29–Cys-54, Cys-37–Cys-55, Cys-44–Cys-58, Cys-66–Cys-79, and Cys-73–Cys-99. Over residues Thr-109 to Pro-121 the composition is skewed to basic and acidic residues. The tract at residues Thr-109–Glu-129 is disordered. Ser-115 is subject to Phosphoserine. A Thyroglobulin type-1 domain is found at Gln-188–Cys-262. Disulfide bonds link Cys-191-Cys-218, Cys-229-Cys-240, and Cys-242-Cys-262.

As to quaternary structure, interacts with IGF1; this interaction enhances the growth stimulatory effects of IGF1 on fibroblasts. Interacts with CAV1; this interaction allows trafficking of IGFBP5 from the plasma membrane to the nucleus. Interacts with NCL; this interaction is necessary for IGFBP5 localization to the nucleus. As to expression, most abundant in kidney, uterus and gastrocnemius muscle.

The protein localises to the secreted. Its subcellular location is the cytoplasm. It is found in the nucleus. Its function is as follows. Multifunctional protein that plays a critical role in regulating the availability of IGFs to their receptors and thereby regulates IGF-mediated cellular processes including proliferation, differentiation, and apoptosis in a cell-type specific manner. Increases the cell proliferation of osteoblasts, intestinal smooth muscle cells and neuroblastoma cells. Enhances adhesion and survival of epithelial cells but decreases adhesion of mesenchymal cells. Once secreted, acts as a major mediator of mTORC1-dependent feedback inhibition of IGF1 signaling. Also plays a role in the induction of extracellular matrix (ECM) production and deposition independently of its nuclear translocation and binding to IGFs. Acts itself as a growth factor that can act independently of IGFs to regulate bone formation. Acts as a ligand for the ROR1 receptor which triggers formation of ROR1/HER2 heterodimer to enhance CREB oncogenic signaling. The polypeptide is Insulin-like growth factor-binding protein 5 (Igfbp5) (Mus musculus (Mouse)).